The chain runs to 254 residues: Hydrolase tropI (254 aa).

Active-site residues include C141, D187, and H219.

The protein belongs to the dienelactone hydrolase family.

Its pathway is secondary metabolite biosynthesis. Hydrolase; part of the gene cluster that mediates the biosynthesis of the tropolone class of fungal maleic anhydrides. The pathway begins with the synthesis of 3-methylorcinaldehyde by the non-reducing polyketide synthase (PKS) tropA. 3-methylorcinaldehyde is the substrate for the FAD-dependent monooxygenase tropB to yield a dearomatized hydroxycyclohexadione. The 2-oxoglutarate-dependent dioxygenase tropC then performs the oxidative ring expansion to provide the first tropolone metabolite stipitaldehyde. Trop D converts stipitaldehyde into stipitacetal which is in turn converted to stipitalide by the short-chain dehydrogenase/reductase tropE. The next steps involve tropF, tropG, tropH, tropI and tropJ to form successive tropolone maleic anhydrides including stipitaldehydic, stipitatonic and stipitatic acids. The polypeptide is Hydrolase tropI (Talaromyces stipitatus (strain ATCC 10500 / CBS 375.48 / QM 6759 / NRRL 1006) (Penicillium stipitatum)).